A 509-amino-acid polypeptide reads, in one-letter code: tRNA-2-methylthio-N(6)-dimethylallyladenosine synthase (509 aa).

The segment covering 1–13 (MNEQQRLASQQAN) has biased composition (polar residues). The disordered stretch occupies residues 1-26 (MNEQQRLASQQANSSKKKEEKDYSKY). Residues 16–25 (KKKEEKDYSK) are compositionally biased toward basic and acidic residues. An MTTase N-terminal domain is found at 66–184 (RKFYIRTYGC…LPYILKDAMF (119 aa)). [4Fe-4S] cluster is bound by residues cysteine 75, cysteine 111, cysteine 145, cysteine 221, cysteine 225, and cysteine 228. A Radical SAM core domain is found at 207 to 437 (RRGDIKAWVN…NALVNKLAIE (231 aa)). The region spanning 440–503 (NRYKGQIVEV…TWSLNGELVE (64 aa)) is the TRAM domain.

Belongs to the methylthiotransferase family. MiaB subfamily. As to quaternary structure, monomer. The cofactor is [4Fe-4S] cluster.

Its subcellular location is the cytoplasm. It catalyses the reaction N(6)-dimethylallyladenosine(37) in tRNA + (sulfur carrier)-SH + AH2 + 2 S-adenosyl-L-methionine = 2-methylsulfanyl-N(6)-dimethylallyladenosine(37) in tRNA + (sulfur carrier)-H + 5'-deoxyadenosine + L-methionine + A + S-adenosyl-L-homocysteine + 2 H(+). Catalyzes the methylthiolation of N6-(dimethylallyl)adenosine (i(6)A), leading to the formation of 2-methylthio-N6-(dimethylallyl)adenosine (ms(2)i(6)A) at position 37 in tRNAs that read codons beginning with uridine. The chain is tRNA-2-methylthio-N(6)-dimethylallyladenosine synthase from Bacillus cereus (strain ATCC 10987 / NRS 248).